The chain runs to 254 residues: Ankyrin repeat domain-containing protein 7 (254 aa).

5 ANK repeats span residues 58 to 87, 91 to 120, 124 to 153, 157 to 186, and 190 to 219; these read KYRT…KINV, ENKS…DPDL, RYNT…DLEA, DGYT…DVNA, and YQRT…ELCY.

Testis specific.

In Homo sapiens (Human), this protein is Ankyrin repeat domain-containing protein 7 (ANKRD7).